Reading from the N-terminus, the 401-residue chain is Probable sodium/metabolite cotransporter BASS5, chloroplastic (401 aa).

The N-terminal 46 residues, 1–46 (MAPNAAVLVRPHIAGVHHLPTGRRLPRLAPPQAVSPPFSRQKGSVV), are a transit peptide targeting the chloroplast. The next 9 helical transmembrane spans lie at 93 to 113 (TIIP…PPSF), 122 to 142 (APAL…KDFI), 159 to 179 (FIIK…IFNL), 185 to 205 (AGIM…ATFL), 215 to 235 (IVMT…LSYF), 247 to 267 (GMMS…LLLN), 273 to 293 (LCSA…ALCV), 299 to 319 (INIK…LFAF), and 372 to 392 (LVGV…FALV).

It belongs to the bile acid:sodium symporter (BASS) (TC 2.A.28) family.

It localises to the membrane. Its subcellular location is the plastid. It is found in the chloroplast envelope. Its function is as follows. May function as sodium-coupled metabolite transporter across the chloroplast envelope. The polypeptide is Probable sodium/metabolite cotransporter BASS5, chloroplastic (BASS5) (Oryza sativa subsp. indica (Rice)).